We begin with the raw amino-acid sequence, 402 residues long: Plasminogen activator inhibitor 1 (402 aa).

The N-terminal stretch at 1-23 (MRMSPVFACLALGLALIFGEGSA) is a signal peptide. N232, N288, and N352 each carry an N-linked (GlcNAc...) asparagine glycan.

The protein belongs to the serpin family. Forms a heterodimer with TMPRSS7. Interacts with VTN. Binds LRP1B; binding is followed by internalization and degradation. Interacts with PPP1CB. In complex with PLAU/uPA, interacts with PLAUR/uPAR. Interacts with SORL1 and LRP1, either alone or in complex with PLAU; these interactions are abolished in the presence of LRPAP1/RAP. The ternary complex composed of PLAUR-PLAU-PAI1 also interacts with SORL1. Interacts with PLAT/tPA. Also interacts with SORL1, when complexed to PLAT/tPA. In terms of tissue distribution, vascular endothelial cells may be the primary site of synthesis of plasma PAI1.

It localises to the secreted. Functionally, serine protease inhibitor. Inhibits TMPRSS7. Is a primary inhibitor of tissue-type plasminogen activator (PLAT) and urokinase-type plasminogen activator (PLAU). As PLAT inhibitor, it is required for fibrinolysis down-regulation and is responsible for the controlled degradation of blood clots. As PLAU inhibitor, it is involved in the regulation of cell adhesion and spreading. Acts as a regulator of cell migration, independently of its role as protease inhibitor. It is required for stimulation of keratinocyte migration during cutaneous injury repair. It is involved in cellular and replicative senescence. Plays a role in alveolar type 2 cells senescence in the lung. Is involved in the regulation of cementogenic differentiation of periodontal ligament stem cells, and regulates odontoblast differentiation and dentin formation during odontogenesis. The polypeptide is Plasminogen activator inhibitor 1 (SERPINE1) (Bos taurus (Bovine)).